Here is a 267-residue protein sequence, read N- to C-terminus: Phosphatidylglycerol--prolipoprotein diacylglyceryl transferase (267 aa).

4 consecutive transmembrane segments (helical) span residues 20-40 (LEIRWYAICILLGLILGVYLA), 57-77 (FILIAFPLSILGARIYYVAFS), 88-108 (IFAIWNGGIAIYGGLITGAIV), and 117-137 (FINTLDFLDIVAPSVMIAQAI). Arg-139 is an a 1,2-diacyl-sn-glycero-3-phospho-(1'-sn-glycerol) binding site. 3 consecutive transmembrane segments (helical) span residues 175–195 (QPTFLFESLWNLLGFGLVCVL), 205–225 (GEITAFYLVWYGCGRLLIEGL), and 235–255 (IRVSQWLSGVLILVGIIMVVL).

Belongs to the Lgt family.

It is found in the cell membrane. The enzyme catalyses L-cysteinyl-[prolipoprotein] + a 1,2-diacyl-sn-glycero-3-phospho-(1'-sn-glycerol) = an S-1,2-diacyl-sn-glyceryl-L-cysteinyl-[prolipoprotein] + sn-glycerol 1-phosphate + H(+). The protein operates within protein modification; lipoprotein biosynthesis (diacylglyceryl transfer). Functionally, catalyzes the transfer of the diacylglyceryl group from phosphatidylglycerol to the sulfhydryl group of the N-terminal cysteine of a prolipoprotein, the first step in the formation of mature lipoproteins. This Streptococcus suis (strain 98HAH33) protein is Phosphatidylglycerol--prolipoprotein diacylglyceryl transferase.